Reading from the N-terminus, the 82-residue chain is Progonadoliberin-3 (82 aa).

The signal sequence occupies residues 1–23 (MDLSSKTVVQVVMLALIAQVTFS). The residue at position 24 (Gln-24) is a Pyrrolidone carboxylic acid. Gly-33 carries the post-translational modification Glycine amide.

It belongs to the GnRH family.

The protein resides in the secreted. In terms of biological role, stimulates the secretion of gonadotropins. In Oncorhynchus masou (Cherry salmon), this protein is Progonadoliberin-3 (gnrh3).